Consider the following 624-residue polypeptide: Phosphatidylserine decarboxylase proenzyme 2 (624 aa).

Positions 1–30 (MGHSPSRHNACGGGGGDGESPPSPLPSRFE) are disordered. A C2 domain is found at 16-129 (GDGESPPSPL…KDLDEHSEVL (114 aa)). 2 EF-hand domains span residues 156–191 (TEQSFARRVLAIVDYNEDGELSLSEFSDLMKAFGNK) and 192–227 (LAVAKIEELFRQADKNGDGIVDMDELAALLANQQEK). Ca(2+) contacts are provided by D169, N171, D173, E175, E180, D205, N207, D209, and E216. Catalysis depends on charge relay system; for autoendoproteolytic cleavage activity residues D425, H481, and S569. The Schiff-base intermediate with substrate; via pyruvic acid; for decarboxylase activity role is filled by S569. Position 569 is a pyruvic acid (Ser); by autocatalysis (S569).

This sequence belongs to the phosphatidylserine decarboxylase family. PSD-B subfamily. Eukaryotic type II sub-subfamily. As to quaternary structure, heterodimer of a large membrane-associated beta subunit and a small pyruvoyl-containing alpha subunit. Pyruvate is required as a cofactor. Is synthesized initially as an inactive proenzyme. Formation of the active enzyme involves a self-maturation process in which the active site pyruvoyl group is generated from an internal serine residue via an autocatalytic post-translational modification. Two non-identical subunits are generated from the proenzyme in this reaction, and the pyruvate is formed at the N-terminus of the alpha chain, which is derived from the carboxyl end of the proenzyme. The autoendoproteolytic cleavage occurs by a canonical serine protease mechanism, in which the side chain hydroxyl group of the serine supplies its oxygen atom to form the C-terminus of the beta chain, while the remainder of the serine residue undergoes an oxidative deamination to produce ammonia and the pyruvoyl prosthetic group on the alpha chain. During this reaction, the Ser that is part of the protease active site of the proenzyme becomes the pyruvoyl prosthetic group, which constitutes an essential element of the active site of the mature decarboxylase.

It localises to the vacuole membrane. The protein localises to the endoplasmic reticulum membrane. It carries out the reaction a 1,2-diacyl-sn-glycero-3-phospho-L-serine + H(+) = a 1,2-diacyl-sn-glycero-3-phosphoethanolamine + CO2. It functions in the pathway phospholipid metabolism; phosphatidylethanolamine biosynthesis; phosphatidylethanolamine from CDP-diacylglycerol: step 2/2. In terms of biological role, catalyzes the formation of phosphatidylethanolamine (PtdEtn) from phosphatidylserine (PtdSer). Plays a central role in phospholipid metabolism and in the interorganelle trafficking of phosphatidylserine. The chain is Phosphatidylserine decarboxylase proenzyme 2 from Oryza sativa subsp. japonica (Rice).